The sequence spans 353 residues: Adenine deaminase (353 aa).

Residues histidine 19, histidine 21, and histidine 208 each contribute to the Zn(2+) site. Glutamate 211 acts as the Proton donor in catalysis. Aspartate 289 is a Zn(2+) binding site. Substrate is bound at residue aspartate 290.

The protein belongs to the metallo-dependent hydrolases superfamily. Adenosine and AMP deaminases family. Adenine deaminase type 2 subfamily. The cofactor is Zn(2+).

It is found in the cytoplasm. It localises to the nucleus. The enzyme catalyses adenine + H2O + H(+) = hypoxanthine + NH4(+). Functionally, catalyzes the hydrolytic deamination of adenine to hypoxanthine. Plays an important role in the purine salvage pathway and in nitrogen catabolism. The polypeptide is Adenine deaminase (Gibberella zeae (strain ATCC MYA-4620 / CBS 123657 / FGSC 9075 / NRRL 31084 / PH-1) (Wheat head blight fungus)).